The following is a 349-amino-acid chain: tRNA pseudouridine synthase D (349 aa).

Residue F27 participates in substrate binding. The Nucleophile role is filled by D80. N129 serves as a coordination point for substrate. The TRUD domain occupies 155-303; it reads GVPNYFGAQR…VEAARRAMLL (149 aa). F329 lines the substrate pocket.

Belongs to the pseudouridine synthase TruD family.

The catalysed reaction is uridine(13) in tRNA = pseudouridine(13) in tRNA. In terms of biological role, responsible for synthesis of pseudouridine from uracil-13 in transfer RNAs. The sequence is that of tRNA pseudouridine synthase D from Escherichia coli O17:K52:H18 (strain UMN026 / ExPEC).